We begin with the raw amino-acid sequence, 429 residues long: Adenylosuccinate synthetase (429 aa).

GTP-binding positions include 12–18 (GDEGKGK) and 40–42 (GHT). The active-site Proton acceptor is D13. Residues D13 and G40 each coordinate Mg(2+). IMP-binding positions include 13 to 16 (DEGK), 38 to 41 (NAGH), T128, R142, Q223, T238, and R302. The active-site Proton donor is the H41. 298–304 (ATTGRKR) is a substrate binding site. GTP is bound by residues R304, 330–332 (KLD), and 412–414 (GTG).

It belongs to the adenylosuccinate synthetase family. As to quaternary structure, homodimer. Requires Mg(2+) as cofactor.

The protein localises to the cytoplasm. The catalysed reaction is IMP + L-aspartate + GTP = N(6)-(1,2-dicarboxyethyl)-AMP + GDP + phosphate + 2 H(+). Its pathway is purine metabolism; AMP biosynthesis via de novo pathway; AMP from IMP: step 1/2. Functionally, plays an important role in the de novo pathway of purine nucleotide biosynthesis. Catalyzes the first committed step in the biosynthesis of AMP from IMP. In Tropheryma whipplei (strain TW08/27) (Whipple's bacillus), this protein is Adenylosuccinate synthetase.